Here is a 260-residue protein sequence, read N- to C-terminus: ATP synthase subunit a (260 aa).

The next 7 helical transmembrane spans lie at 30–50 (IAFTNSALWMAITTAVLIVFV), 96–116 (LFAFILFANMLGLLPLALVGV), 125–145 (FTVTGVLAIMSFAIVLGVGFA), 151–171 (FFSLFVPHGTPVPMIPIIFPI), 187–207 (LFVAMMAGHVLLEVLSGFVIS), 213–233 (VGTFFLAAVPSFLLMIGICAL), and 234–254 (ELLVAGIQAYVFALLTCVYLN).

The protein belongs to the ATPase A chain family. In terms of assembly, F-type ATPases have 2 components, CF(1) - the catalytic core - and CF(0) - the membrane proton channel. CF(1) has five subunits: alpha(3), beta(3), gamma(1), delta(1), epsilon(1). CF(0) has three main subunits: a(1), b(2) and c(9-12). The alpha and beta chains form an alternating ring which encloses part of the gamma chain. CF(1) is attached to CF(0) by a central stalk formed by the gamma and epsilon chains, while a peripheral stalk is formed by the delta and b chains.

Its subcellular location is the cell inner membrane. Its function is as follows. Key component of the proton channel; it plays a direct role in the translocation of protons across the membrane. The protein is ATP synthase subunit a of Novosphingobium aromaticivorans (strain ATCC 700278 / DSM 12444 / CCUG 56034 / CIP 105152 / NBRC 16084 / F199).